Here is a 99-residue protein sequence, read N- to C-terminus: Ubiquitin-related modifier 1 homolog (99 aa).

1-thioglycine is present on Gly-99. A Glycyl lysine isopeptide (Gly-Lys) (interchain with K-? in acceptor proteins) cross-link involves residue Gly-99.

This sequence belongs to the URM1 family. Interacts with cer. Post-translationally, C-terminal thiocarboxylation occurs in 2 steps, it is first acyl-adenylated (-COAMP) via the hesA/moeB/thiF part of the MOCS3 homolog, then thiocarboxylated (-COSH) via the rhodanese domain of the MOCS3 homolog.

It localises to the cytoplasm. It participates in tRNA modification; 5-methoxycarbonylmethyl-2-thiouridine-tRNA biosynthesis. Functionally, acts as a sulfur carrier required for 2-thiolation of mcm(5)S(2)U at tRNA wobble positions of cytosolic tRNA(Lys), tRNA(Glu) and tRNA(Gln). Serves as sulfur donor in tRNA 2-thiolation reaction by being thiocarboxylated (-COSH) at its C-terminus by MOCS3. The sulfur is then transferred to tRNA to form 2-thiolation of mcm(5)S(2)U. Also acts as a ubiquitin-like protein (UBL) that is covalently conjugated via an isopeptide bond to lysine residues of target proteins such as Prx2/Jafrac1, Ciao1, Eip71CD and GILT1. The thiocarboxylated form serves as substrate for conjugation and oxidative stress specifically induces the formation of UBL-protein conjugates. The protein is Ubiquitin-related modifier 1 homolog of Drosophila persimilis (Fruit fly).